The primary structure comprises 174 residues: Large ribosomal subunit protein uL10 (174 aa).

The protein belongs to the universal ribosomal protein uL10 family. In terms of assembly, part of the ribosomal stalk of the 50S ribosomal subunit. The N-terminus interacts with L11 and the large rRNA to form the base of the stalk. The C-terminus forms an elongated spine to which L12 dimers bind in a sequential fashion forming a multimeric L10(L12)X complex.

Its function is as follows. Forms part of the ribosomal stalk, playing a central role in the interaction of the ribosome with GTP-bound translation factors. This is Large ribosomal subunit protein uL10 from Geotalea uraniireducens (strain Rf4) (Geobacter uraniireducens).